The following is a 201-amino-acid chain: Recombination protein RecR (201 aa).

The segment at 59-74 (CEICGNMDTENICRIC) adopts a C4-type zinc-finger fold. The Toprim domain occupies 82 to 177 (SIIAIVETVA…KISRLASGIP (96 aa)).

The protein belongs to the RecR family.

May play a role in DNA repair. It seems to be involved in an RecBC-independent recombinational process of DNA repair. It may act with RecF and RecO. This Rickettsia peacockii (strain Rustic) protein is Recombination protein RecR.